A 191-amino-acid polypeptide reads, in one-letter code: Flagellar transcriptional regulator FlhC (191 aa).

The Zn(2+) site is built by Cys137, Cys140, Cys157, and Cys160.

Belongs to the FlhC family. In terms of assembly, heterohexamer composed of two FlhC and four FlhD subunits. Each FlhC binds a FlhD dimer, forming a heterotrimer, and a hexamer assembles by dimerization of two heterotrimers. Zn(2+) is required as a cofactor.

The protein localises to the cytoplasm. Functions in complex with FlhD as a master transcriptional regulator that regulates transcription of several flagellar and non-flagellar operons by binding to their promoter region. Activates expression of class 2 flagellar genes, including fliA, which is a flagellum-specific sigma factor that turns on the class 3 genes. Also regulates genes whose products function in a variety of physiological pathways. This chain is Flagellar transcriptional regulator FlhC, found in Nitrosomonas eutropha (strain DSM 101675 / C91 / Nm57).